A 252-amino-acid chain; its full sequence is Probable transcriptional regulatory protein HNE_0161 (252 aa).

Belongs to the TACO1 family.

The protein localises to the cytoplasm. The chain is Probable transcriptional regulatory protein HNE_0161 from Hyphomonas neptunium (strain ATCC 15444).